A 364-amino-acid polypeptide reads, in one-letter code: Lysophosphatidic acid receptor 1 (364 aa).

Over Met1–Lys50 the chain is Extracellular. 2 cysteine pairs are disulfide-bonded: Cys24/Cys190 and Cys188/Cys195. N-linked (GlcNAc...) asparagine glycans are attached at residues Asn27 and Asn35. Residue Lys39 participates in a 1-acyl-sn-glycero-3-phosphate binding. Residues Leu51–Tyr75 traverse the membrane as a helical segment. Over Val76–Pro83 the chain is Cytoplasmic. The helical transmembrane segment at Ile84 to Phe107 threads the bilayer. Over Asn108–Trp121 the chain is Extracellular. A helical transmembrane segment spans residues Leu122 to Ile144. Arg124–Asp129 is a binding site for a 1-acyl-sn-glycero-3-phosphate. Residues Glu145 to Arg163 are Cytoplasmic-facing. The helical transmembrane segment at Val164–Val184 threads the bilayer. Residues Gly185–Asp204 are Extracellular-facing. A helical transmembrane segment spans residues Ser205–Tyr225. Trp210 lines the a 1-acyl-sn-glycero-3-phosphate pocket. Over Ala226–Ser255 the chain is Cytoplasmic. A helical membrane pass occupies residues Leu256–Leu280. The Extracellular portion of the chain corresponds to Asp281–Lys294. Cys284 and Cys287 form a disulfide bridge. A helical membrane pass occupies residues Phe295–Asp315. Residues Lys316 to Val364 lie on the Cytoplasmic side of the membrane. A Phosphoserine modification is found at Ser341. A Phosphothreonine modification is found at Thr351.

It belongs to the G-protein coupled receptor 1 family. Interacts with RALA and GRK2. Interacts with GNAQ and GNA13. Interacts with CD14; the interaction is enhanced by exposure to bacterial lipopolysaccharide (LPS). In terms of processing, N-glycosylated. Detected in lung. Detected in oligodendrocytes in corpus callosum in brain cortex (at protein level). Expressed within the embryonic cerebral cortex, where it is enriched in the ventricular zone. In the adult brain, also expressed in oligodendrocytes, as well as Schwann cells of the peripheral nervous system. Expressed in many other tissues, including lung, heart, intestine, spleen, thymus, and stomach. No expression in liver. Detected in kidney and testis. Detected in embryonic fibroblasts. Detected in adult lung fibroblasts and lung endothelial cells. Detected in dorsal root ganglion and dorsal root. Detected in astrocytes. Detected in bone.

It is found in the cell surface. Its subcellular location is the cell membrane. The protein localises to the endosome. Functionally, receptor for lysophosphatidic acid (LPA). Plays a role in the reorganization of the actin cytoskeleton, cell migration, differentiation and proliferation, and thereby contributes to the responses to tissue damage and infectious agents. Activates downstream signaling cascades via the G(i)/G(o), G(12)/G(13), and G(q) families of heteromeric G proteins. Signaling inhibits adenylyl cyclase activity and decreases cellular cAMP levels. Signaling triggers an increase of cytoplasmic Ca(2+) levels. Activates RALA; this leads to the activation of phospholipase C (PLC) and the formation of inositol 1,4,5-trisphosphate. Signaling mediates activation of down-stream MAP kinases. Contributes to the regulation of cell shape. Promotes Rho-dependent reorganization of the actin cytoskeleton in neuronal cells and neurite retraction. Promotes the activation of Rho and the formation of actin stress fibers. Promotes formation of lamellipodia at the leading edge of migrating cells via activation of RAC1. Through its function as LPA receptor, plays a role in chemotaxis and cell migration, including responses to injury and wounding. Plays a role in triggering inflammation in response to bacterial lipopolysaccharide (LPS) via its interaction with CD14. Promotes cell proliferation in response to LPA. Inhibits the intracellular ciliogenesis pathway in response to LPA and through AKT1 activation. Required for normal skeleton development. May play a role in osteoblast differentiation. Required for normal brain development. Required for normal proliferation, survival and maturation of newly formed neurons in the adult dentate gyrus. Plays a role in pain perception and in the initiation of neuropathic pain. The chain is Lysophosphatidic acid receptor 1 (Lpar1) from Mus musculus (Mouse).